Consider the following 88-residue polypeptide: Phosphocarrier protein HPr (88 aa).

Residues Met-1–Glu-88 form the HPr domain. A Phosphoserine modification is found at Ser-12. His-15 functions as the Pros-phosphohistidine intermediate in the catalytic mechanism. A Phosphoserine; by HPrK/P modification is found at Ser-46.

The protein belongs to the HPr family.

The protein resides in the cytoplasm. Phosphorylation on Ser-46 inhibits the phosphoryl transfer from enzyme I to HPr. Functionally, general (non sugar-specific) component of the phosphoenolpyruvate-dependent sugar phosphotransferase system (sugar PTS). This major carbohydrate active-transport system catalyzes the phosphorylation of incoming sugar substrates concomitantly with their translocation across the cell membrane. The phosphoryl group from phosphoenolpyruvate (PEP) is transferred to the phosphoryl carrier protein HPr by enzyme I. Phospho-HPr then transfers it to the PTS EIIA domain. In terms of biological role, P-Ser-HPr interacts with the catabolite control protein A (CcpA), forming a complex that binds to DNA at the catabolite response elements cre, operator sites preceding a large number of catabolite-regulated genes. Thus, P-Ser-HPr is a corepressor in carbon catabolite repression (CCR), a mechanism that allows bacteria to coordinate and optimize the utilization of available carbon sources. P-Ser-HPr also plays a role in inducer exclusion, in which it probably interacts with several non-PTS permeases and inhibits their transport activity. The sequence is that of Phosphocarrier protein HPr (ptsH) from Geobacillus stearothermophilus (Bacillus stearothermophilus).